Consider the following 63-residue polypeptide: Disintegrin schistatin-like subunit B (63 aa).

The 63-residue stretch at 1–63 (NSVNPCCDPQ…TPDCPRNRYN (63 aa)) folds into the Disintegrin domain. 4 disulfides stabilise this stretch: Cys6–Cys29, Cys20–Cys26, Cys25–Cys50, and Cys38–Cys57. Residues 42–44 (RGD) carry the Cell attachment site motif.

The protein belongs to the disintegrin family. Dimeric disintegrin subfamily. As to quaternary structure, heterodimer with subunit A; disulfide-linked. In terms of tissue distribution, expressed by the venom gland.

The protein resides in the secreted. In terms of biological role, may bind to both alpha-IIb/beta-3 (ITGA2B/ITGB3) and alpha-V/beta-3 (ITGAV/ITGB3) integrins, and may inhibit platelet aggregation. This Echis carinatus (Saw-scaled viper) protein is Disintegrin schistatin-like subunit B.